A 529-amino-acid chain; its full sequence is Bifunctional purine biosynthesis protein PurH (529 aa).

An MGS-like domain is found at 1-148 (MTNRNVIKNV…KNYKNVLVVT (148 aa)).

The protein belongs to the PurH family.

It carries out the reaction (6R)-10-formyltetrahydrofolate + 5-amino-1-(5-phospho-beta-D-ribosyl)imidazole-4-carboxamide = 5-formamido-1-(5-phospho-D-ribosyl)imidazole-4-carboxamide + (6S)-5,6,7,8-tetrahydrofolate. The catalysed reaction is IMP + H2O = 5-formamido-1-(5-phospho-D-ribosyl)imidazole-4-carboxamide. Its pathway is purine metabolism; IMP biosynthesis via de novo pathway; 5-formamido-1-(5-phospho-D-ribosyl)imidazole-4-carboxamide from 5-amino-1-(5-phospho-D-ribosyl)imidazole-4-carboxamide (10-formyl THF route): step 1/1. It participates in purine metabolism; IMP biosynthesis via de novo pathway; IMP from 5-formamido-1-(5-phospho-D-ribosyl)imidazole-4-carboxamide: step 1/1. This chain is Bifunctional purine biosynthesis protein PurH, found in Buchnera aphidicola subsp. Baizongia pistaciae (strain Bp).